The sequence spans 281 residues: 33 kDa chaperonin (281 aa).

Intrachain disulfides connect Cys-229–Cys-231 and Cys-262–Cys-265.

Belongs to the HSP33 family. In terms of processing, under oxidizing conditions two disulfide bonds are formed involving the reactive cysteines. Under reducing conditions zinc is bound to the reactive cysteines and the protein is inactive.

Its subcellular location is the cytoplasm. In terms of biological role, redox regulated molecular chaperone. Protects both thermally unfolding and oxidatively damaged proteins from irreversible aggregation. Plays an important role in the bacterial defense system toward oxidative stress. The polypeptide is 33 kDa chaperonin (Pseudoalteromonas translucida (strain TAC 125)).